We begin with the raw amino-acid sequence, 491 residues long: Serine hydroxymethyltransferase (491 aa).

Residues Leu173 and 177-179 (GHL) contribute to the (6S)-5,6,7,8-tetrahydrofolate site. The residue at position 285 (Lys285) is an N6-(pyridoxal phosphate)lysine.

The protein belongs to the SHMT family. In terms of assembly, homodimer. The cofactor is pyridoxal 5'-phosphate.

Its subcellular location is the cytoplasm. It carries out the reaction (6R)-5,10-methylene-5,6,7,8-tetrahydrofolate + glycine + H2O = (6S)-5,6,7,8-tetrahydrofolate + L-serine. The protein operates within one-carbon metabolism; tetrahydrofolate interconversion. It functions in the pathway amino-acid biosynthesis; glycine biosynthesis; glycine from L-serine: step 1/1. Catalyzes the reversible interconversion of serine and glycine with tetrahydrofolate (THF) serving as the one-carbon carrier. This reaction serves as the major source of one-carbon groups required for the biosynthesis of purines, thymidylate, methionine, and other important biomolecules. Also exhibits THF-independent aldolase activity toward beta-hydroxyamino acids, producing glycine and aldehydes, via a retro-aldol mechanism. The polypeptide is Serine hydroxymethyltransferase (Cutibacterium acnes (strain DSM 16379 / KPA171202) (Propionibacterium acnes)).